A 510-amino-acid chain; its full sequence is NAD(P)H-quinone oxidoreductase subunit 2 B, chloroplastic (510 aa).

The next 13 membrane-spanning stretches (helical) occupy residues 24 to 44 (LLLF…GLIL), 57 to 77 (IPWL…ALLF), 99 to 119 (IFQF…VEYI), 124 to 144 (MAIT…MFLC), 150 to 170 (ITIF…SGYT), 183 to 203 (YLLM…WLYG), 229 to 249 (ISIA…PAPF), 295 to 315 (WHLL…LIAI), 323 to 343 (MLAY…IVGD), 354 to 374 (YMLF…LFGL), 395 to 415 (ALSS…AGFF), 418 to 438 (LHLF…IGLL), and 484 to 504 (MIVC…IIAI).

It belongs to the complex I subunit 2 family. In terms of assembly, NDH is composed of at least 16 different subunits, 5 of which are encoded in the nucleus.

Its subcellular location is the plastid. The protein resides in the chloroplast thylakoid membrane. It carries out the reaction a plastoquinone + NADH + (n+1) H(+)(in) = a plastoquinol + NAD(+) + n H(+)(out). It catalyses the reaction a plastoquinone + NADPH + (n+1) H(+)(in) = a plastoquinol + NADP(+) + n H(+)(out). Its function is as follows. NDH shuttles electrons from NAD(P)H:plastoquinone, via FMN and iron-sulfur (Fe-S) centers, to quinones in the photosynthetic chain and possibly in a chloroplast respiratory chain. The immediate electron acceptor for the enzyme in this species is believed to be plastoquinone. Couples the redox reaction to proton translocation, and thus conserves the redox energy in a proton gradient. In Drimys granadensis, this protein is NAD(P)H-quinone oxidoreductase subunit 2 B, chloroplastic.